The sequence spans 199 residues: NAD(P)H dehydrogenase (quinone) (199 aa).

One can recognise a Flavodoxin-like domain in the interval 4–190 (ILVLYYSSWG…EGARFQGKRL (187 aa)). Residues 10–15 (SSWGHM) and 78–80 (TRY) contribute to the FMN site. Residue tryptophan 12 coordinates NAD(+). Tryptophan 98 provides a ligand contact to substrate. Residues 113 to 119 (STATQHG) and histidine 134 contribute to the FMN site. The interval 155–175 (VRGGAPYGMTTTSDTDGSRMP) is disordered.

The protein belongs to the WrbA family. FMN serves as cofactor.

The catalysed reaction is a quinone + NADH + H(+) = a quinol + NAD(+). It carries out the reaction a quinone + NADPH + H(+) = a quinol + NADP(+). This Chelativorans sp. (strain BNC1) protein is NAD(P)H dehydrogenase (quinone).